A 545-amino-acid polypeptide reads, in one-letter code: Capsular polysaccharide phosphotransferase SacB (545 aa).

This sequence belongs to the stealth family.

May be the polymerase that links individual UDP-N-acetyl-D-mannosamine monomers. In serotype A the capsule is composed of repeated units of (alpha 1-6)-linked N-acetyl-D-mannosamine-1-phosphate. This Neisseria meningitidis serogroup A protein is Capsular polysaccharide phosphotransferase SacB (sacB).